The following is a 31-amino-acid chain: MLTLLSYFGLLLAALISTLVLFIGLNKVKLI.

The helical transmembrane segment at 4–24 (LLSYFGLLLAALISTLVLFIG) threads the bilayer.

This sequence belongs to the PetL family. In terms of assembly, the 4 large subunits of the cytochrome b6-f complex are cytochrome b6, subunit IV (17 kDa polypeptide, PetD), cytochrome f and the Rieske protein, while the 4 small subunits are PetG, PetL, PetM and PetN. The complex functions as a dimer.

The protein localises to the plastid. It is found in the chloroplast thylakoid membrane. In terms of biological role, component of the cytochrome b6-f complex, which mediates electron transfer between photosystem II (PSII) and photosystem I (PSI), cyclic electron flow around PSI, and state transitions. PetL is important for photoautotrophic growth as well as for electron transfer efficiency and stability of the cytochrome b6-f complex. The sequence is that of Cytochrome b6-f complex subunit 6 from Psilotum nudum (Whisk fern).